The chain runs to 177 residues: Large ribosomal subunit protein uL6 (177 aa).

Belongs to the universal ribosomal protein uL6 family. As to quaternary structure, part of the 50S ribosomal subunit.

Functionally, this protein binds to the 23S rRNA, and is important in its secondary structure. It is located near the subunit interface in the base of the L7/L12 stalk, and near the tRNA binding site of the peptidyltransferase center. The chain is Large ribosomal subunit protein uL6 from Rhizobium leguminosarum bv. trifolii (strain WSM2304).